We begin with the raw amino-acid sequence, 441 residues long: Putative serine/threonine-protein kinase F31E3.2 (441 aa).

A compositionally biased stretch (basic residues) spans 1 to 16; it reads MGNVATRKRPGCHHHI. The disordered stretch occupies residues 1 to 41; sequence MGNVATRKRPGCHHHIGRNEENLDDDEDGPAKKRLRIGEPQ. Residues 126 to 381 enclose the Protein kinase domain; it reads FVLERQLGRG…FTVLHAHPFF (256 aa). ATP-binding positions include 132–140 and lysine 156; that span reads LGRGSFGVV. Aspartate 253 serves as the catalytic Proton acceptor.

It belongs to the protein kinase superfamily. Ser/Thr protein kinase family.

It carries out the reaction L-seryl-[protein] + ATP = O-phospho-L-seryl-[protein] + ADP + H(+). It catalyses the reaction L-threonyl-[protein] + ATP = O-phospho-L-threonyl-[protein] + ADP + H(+). This Caenorhabditis elegans protein is Putative serine/threonine-protein kinase F31E3.2.